A 501-amino-acid chain; its full sequence is Probable cytochrome P450 508A4 (501 aa).

A helical membrane pass occupies residues 1 to 21 (MIMLIKVFVLLLVVYILHNSY). Cys445 provides a ligand contact to heme.

The protein belongs to the cytochrome P450 family. Heme is required as a cofactor.

Its subcellular location is the membrane. This Dictyostelium discoideum (Social amoeba) protein is Probable cytochrome P450 508A4 (cyp508A4).